The sequence spans 180 residues: Large ribosomal subunit protein uL5 (180 aa).

Belongs to the universal ribosomal protein uL5 family. In terms of assembly, part of the 50S ribosomal subunit; part of the 5S rRNA/L5/L18/L25 subcomplex. Contacts the 5S rRNA and the P site tRNA. Forms a bridge to the 30S subunit in the 70S ribosome.

Its function is as follows. This is one of the proteins that bind and probably mediate the attachment of the 5S RNA into the large ribosomal subunit, where it forms part of the central protuberance. In the 70S ribosome it contacts protein S13 of the 30S subunit (bridge B1b), connecting the 2 subunits; this bridge is implicated in subunit movement. Contacts the P site tRNA; the 5S rRNA and some of its associated proteins might help stabilize positioning of ribosome-bound tRNAs. In Lactobacillus delbrueckii subsp. bulgaricus (strain ATCC 11842 / DSM 20081 / BCRC 10696 / JCM 1002 / NBRC 13953 / NCIMB 11778 / NCTC 12712 / WDCM 00102 / Lb 14), this protein is Large ribosomal subunit protein uL5.